The primary structure comprises 406 residues: 2,3-bisphosphoglycerate-independent phosphoglycerate mutase (406 aa).

It belongs to the BPG-independent phosphoglycerate mutase family. A-PGAM subfamily.

It carries out the reaction (2R)-2-phosphoglycerate = (2R)-3-phosphoglycerate. It participates in carbohydrate degradation; glycolysis; pyruvate from D-glyceraldehyde 3-phosphate: step 3/5. Functionally, catalyzes the interconversion of 2-phosphoglycerate and 3-phosphoglycerate. The polypeptide is 2,3-bisphosphoglycerate-independent phosphoglycerate mutase (Methanococcus maripaludis (strain DSM 14266 / JCM 13030 / NBRC 101832 / S2 / LL)).